The primary structure comprises 400 residues: Argininosuccinate synthase (400 aa).

10–18 (AYSGGVDTS) lines the ATP pocket. Tyr89 lines the L-citrulline pocket. Gly119 serves as a coordination point for ATP. 3 residues coordinate L-aspartate: Thr121, Asn125, and Asp126. An L-citrulline-binding site is contributed by Asn125. L-citrulline-binding residues include Arg129, Ser177, Ser186, Glu262, and Tyr274.

This sequence belongs to the argininosuccinate synthase family. Type 1 subfamily. Homotetramer.

The protein resides in the cytoplasm. The catalysed reaction is L-citrulline + L-aspartate + ATP = 2-(N(omega)-L-arginino)succinate + AMP + diphosphate + H(+). It participates in amino-acid biosynthesis; L-arginine biosynthesis; L-arginine from L-ornithine and carbamoyl phosphate: step 2/3. The chain is Argininosuccinate synthase from Synechococcus sp. (strain JA-2-3B'a(2-13)) (Cyanobacteria bacterium Yellowstone B-Prime).